The primary structure comprises 420 residues: 3-phosphoshikimate 1-carboxyvinyltransferase (420 aa).

Lys-26, Ser-27, and Arg-31 together coordinate 3-phosphoshikimate. Lys-26 contacts phosphoenolpyruvate. Phosphoenolpyruvate-binding residues include Gly-97 and Arg-125. 6 residues coordinate 3-phosphoshikimate: Ser-170, Ser-171, Gln-172, Asp-297, Asn-320, and Lys-324. A phosphoenolpyruvate-binding site is contributed by Gln-172. Asp-297 functions as the Proton acceptor in the catalytic mechanism. Residues Arg-328, Arg-375, and Lys-400 each coordinate phosphoenolpyruvate.

This sequence belongs to the EPSP synthase family. As to quaternary structure, monomer.

The protein resides in the cytoplasm. The catalysed reaction is 3-phosphoshikimate + phosphoenolpyruvate = 5-O-(1-carboxyvinyl)-3-phosphoshikimate + phosphate. Its pathway is metabolic intermediate biosynthesis; chorismate biosynthesis; chorismate from D-erythrose 4-phosphate and phosphoenolpyruvate: step 6/7. Functionally, catalyzes the transfer of the enolpyruvyl moiety of phosphoenolpyruvate (PEP) to the 5-hydroxyl of shikimate-3-phosphate (S3P) to produce enolpyruvyl shikimate-3-phosphate and inorganic phosphate. This Rhizobium etli (strain ATCC 51251 / DSM 11541 / JCM 21823 / NBRC 15573 / CFN 42) protein is 3-phosphoshikimate 1-carboxyvinyltransferase.